We begin with the raw amino-acid sequence, 159 residues long: Thymic stromal lymphopoietin (159 aa).

The signal sequence occupies residues 1-28 (MFPFALLYVLSVSFRKIFILQLVGLVLT). 3 disulfides stabilise this stretch: cysteine 34–cysteine 110, cysteine 69–cysteine 75, and cysteine 90–cysteine 137. Asparagine 64 carries an N-linked (GlcNAc...) asparagine glycan. N-linked (GlcNAc...) asparagine glycosylation is present at asparagine 119.

In terms of assembly, interacts with a receptor composed of CRLF2 and IL7R. Binding of TSLP to CRLF2/TSLPR is a mechanistic prerequisite for recruitment of IL7R to the high-affinity ternary complex. Isoform 1 is expressed in a number of tissues including heart, liver and prostate. Isoform 2 is the predominant form in keratinocytes of oral mucosa, skin and in salivary glands. It is secreted into saliva.

The protein resides in the secreted. Cytokine that induces the release of T-cell-attracting chemokines from monocytes and, in particular, enhances the maturation of CD11c(+) dendritic cells. Can induce allergic inflammation by directly activating mast cells. Its function is as follows. May act as an antimicrobial peptide in the oral cavity and on the skin. The sequence is that of Thymic stromal lymphopoietin (TSLP) from Homo sapiens (Human).